The chain runs to 147 residues: Transcriptional regulator MraZ (147 aa).

SpoVT-AbrB domains are found at residues 5 to 52 (NHPT…PMEE) and 81 to 124 (GQVV…NAEH).

It belongs to the MraZ family. In terms of assembly, forms oligomers.

The protein localises to the cytoplasm. It is found in the nucleoid. The polypeptide is Transcriptional regulator MraZ (Koribacter versatilis (strain Ellin345)).